Here is a 612-residue protein sequence, read N- to C-terminus: Citryl-spermidine/3,4-dihydroxybenzoyl-citryl-spermidine:spermidine ligase (612 aa).

Residues 282-284 (SMR), K298, R310, Y390, and E461 contribute to the ATP site.

This sequence belongs to the IucA/IucC family. As to quaternary structure, homodimer.

It carries out the reaction N(8)-citryl-spermidine + spermidine + ATP = N(8),N'(8)-citryl-bis(spermidine) + AMP + diphosphate + H(+). It catalyses the reaction N(1)-(3,4-dihydroxybenzoyl)-N(8)-citryl-spermidine + spermidine + ATP = N(1)-(3,4-dihydroxybenzoyl)-N(8),N'(8)-citryl-bis(spermidine) + AMP + diphosphate + H(+). It functions in the pathway siderophore biosynthesis; petrobactin biosynthesis. In terms of biological role, involved in the biosynthesis of petrobactin, a catecholate siderophore that functions in both iron acquisition and virulence. Catalyzes the ATP-dependent condensation of spermidine with N(8)-citryl-spermidine or N(1)-(3,4-dihydroxbenzoyl)-N(8)-citryl-spermidine, two intermediates in petrobactin biosynthesis pathway. This is Citryl-spermidine/3,4-dihydroxybenzoyl-citryl-spermidine:spermidine ligase from Bacillus anthracis.